The primary structure comprises 94 residues: uncharacterized protein (94 aa).

An N-terminal signal peptide occupies residues 1 to 25 (MRAAIAVLFIALVGLATYHLVMSQA).

This is an uncharacterized protein from Archaeoglobus fulgidus (strain ATCC 49558 / DSM 4304 / JCM 9628 / NBRC 100126 / VC-16).